The sequence spans 476 residues: Ribulose bisphosphate carboxylase large chain (476 aa).

Substrate contacts are provided by Asn124 and Thr174. The active-site Proton acceptor is the Lys176. Substrate is bound at residue Lys178. Mg(2+)-binding residues include Lys202, Asp204, and Glu205. Residue Lys202 is modified to N6-carboxylysine. His295 (proton acceptor) is an active-site residue. Substrate contacts are provided by Arg296, His328, and Ser380.

It belongs to the RuBisCO large chain family. Type I subfamily. Heterohexadecamer of 8 large chains and 8 small chains; disulfide-linked. The disulfide link is formed within the large subunit homodimers. Mg(2+) is required as a cofactor. In terms of processing, the disulfide bond which can form in the large chain dimeric partners within the hexadecamer appears to be associated with oxidative stress and protein turnover.

It localises to the carboxysome. It carries out the reaction 2 (2R)-3-phosphoglycerate + 2 H(+) = D-ribulose 1,5-bisphosphate + CO2 + H2O. It catalyses the reaction D-ribulose 1,5-bisphosphate + O2 = 2-phosphoglycolate + (2R)-3-phosphoglycerate + 2 H(+). In terms of biological role, ruBisCO catalyzes two reactions: the carboxylation of D-ribulose 1,5-bisphosphate, the primary event in carbon dioxide fixation, as well as the oxidative fragmentation of the pentose substrate in the photorespiration process. Both reactions occur simultaneously and in competition at the same active site. This is Ribulose bisphosphate carboxylase large chain from Nostoc punctiforme (strain ATCC 29133 / PCC 73102).